A 343-amino-acid polypeptide reads, in one-letter code: Holliday junction branch migration complex subunit RuvB (343 aa).

The large ATPase domain (RuvB-L) stretch occupies residues 1-181 (MDRIIDSAAT…FGIVQRLEFY (181 aa)). Residues I20, R21, G62, K65, T66, T67, 128 to 130 (EDF), R171, Y181, and R218 contribute to the ATP site. T66 contacts Mg(2+). Positions 182–252 (SPEDLARIVR…VAQAAMQMLK (71 aa)) are small ATPAse domain (RuvB-S). The interval 255 to 343 (QGGFDELDRR…SAFTDPEDLF (89 aa)) is head domain (RuvB-H). Residues R291, R310, and R315 each coordinate DNA.

The protein belongs to the RuvB family. Homohexamer. Forms an RuvA(8)-RuvB(12)-Holliday junction (HJ) complex. HJ DNA is sandwiched between 2 RuvA tetramers; dsDNA enters through RuvA and exits via RuvB. An RuvB hexamer assembles on each DNA strand where it exits the tetramer. Each RuvB hexamer is contacted by two RuvA subunits (via domain III) on 2 adjacent RuvB subunits; this complex drives branch migration. In the full resolvosome a probable DNA-RuvA(4)-RuvB(12)-RuvC(2) complex forms which resolves the HJ.

Its subcellular location is the cytoplasm. The catalysed reaction is ATP + H2O = ADP + phosphate + H(+). Functionally, the RuvA-RuvB-RuvC complex processes Holliday junction (HJ) DNA during genetic recombination and DNA repair, while the RuvA-RuvB complex plays an important role in the rescue of blocked DNA replication forks via replication fork reversal (RFR). RuvA specifically binds to HJ cruciform DNA, conferring on it an open structure. The RuvB hexamer acts as an ATP-dependent pump, pulling dsDNA into and through the RuvAB complex. RuvB forms 2 homohexamers on either side of HJ DNA bound by 1 or 2 RuvA tetramers; 4 subunits per hexamer contact DNA at a time. Coordinated motions by a converter formed by DNA-disengaged RuvB subunits stimulates ATP hydrolysis and nucleotide exchange. Immobilization of the converter enables RuvB to convert the ATP-contained energy into a lever motion, pulling 2 nucleotides of DNA out of the RuvA tetramer per ATP hydrolyzed, thus driving DNA branch migration. The RuvB motors rotate together with the DNA substrate, which together with the progressing nucleotide cycle form the mechanistic basis for DNA recombination by continuous HJ branch migration. Branch migration allows RuvC to scan DNA until it finds its consensus sequence, where it cleaves and resolves cruciform DNA. This is Holliday junction branch migration complex subunit RuvB from Xylella fastidiosa (strain Temecula1 / ATCC 700964).